A 151-amino-acid polypeptide reads, in one-letter code: Lipoprotein signal peptidase (151 aa).

Helical transmembrane passes span 3-23, 59-79, and 85-107; these read LYIILGLLILVGDQLLKGWIV, WFFYIVTIIAVGVIGYLFYTS, and LYRIGLTLMLAGALGNFIDRLHL. Active-site residues include D112 and D128. The chain crosses the membrane as a helical span at residues 123-143; sequence IFNVADTALTCGVICVFIAIL.

This sequence belongs to the peptidase A8 family.

It is found in the cell membrane. It catalyses the reaction Release of signal peptides from bacterial membrane prolipoproteins. Hydrolyzes -Xaa-Yaa-Zaa-|-(S,diacylglyceryl)Cys-, in which Xaa is hydrophobic (preferably Leu), and Yaa (Ala or Ser) and Zaa (Gly or Ala) have small, neutral side chains.. It participates in protein modification; lipoprotein biosynthesis (signal peptide cleavage). Functionally, this protein specifically catalyzes the removal of signal peptides from prolipoproteins. The protein is Lipoprotein signal peptidase of Latilactobacillus sakei subsp. sakei (strain 23K) (Lactobacillus sakei subsp. sakei).